Reading from the N-terminus, the 338-residue chain is Phosphatidylinositol:ceramide inositolphosphotransferase (338 aa).

Residues 1 to 36 (MTSHVTAHDVGGNEDIGTDHVPWYKQPLPLCTQVMR) are Cytoplasmic-facing. The chain crosses the membrane as a helical span at residues 37–57 (FILLLLLTVMFLGVAILVANA). Residues 58–87 (RMPDPEKVRPLPDLLLESIPKVALLENGTN) lie on the Extracellular side of the membrane. Residues 88–108 (VIIFLLNATTVVVGFKVFLLE) traverse the membrane as a helical segment. The Cytoplasmic segment spans residues 109–116 (RHMNGLPR). The helical transmembrane segment at 117 to 137 (VTFLVGVPKIGSFLNRMAFGV) threads the bilayer. At 138 to 152 (LDSGRRPFPLKNVFP) the chain is on the extracellular side. A helical transmembrane segment spans residues 153–173 (IMAIRFLTSYAVVMVFRAFVI). Topologically, residues 174–189 (MGTSYPATDNHCQNPQ) are cytoplasmic. A helical membrane pass occupies residues 190–210 (VIEHPVLNVILTLVTLGSGAI). The Extracellular portion of the chain corresponds to 211–222 (HCGDLMFSGHTM). Residue H220 is part of the active site. The chain crosses the membrane as a helical span at residues 223–243 (ILSLAFILAWDYSPFLHPWAV). Topologically, residues 244 to 338 (RVWVSVLLPI…TDASAALPEH (95 aa)) are cytoplasmic. Catalysis depends on residues H264 and D268.

It belongs to the sphingomyelin synthase family.

The protein resides in the membrane. Its function is as follows. Bidirectional lipid inositolphosphotransferase capable of converting phosphatidylinositol (PI) and ceramide to inositol-phosphorylceramide (IPC) and diacylglycerol (DAG) and vice versa. Direction is dependent on the relative concentrations of DAG and ceramide as phosphoinositol acceptors. Essential for viability of the pathogenic bloodstream stage of this human protozoan parasite and, consequently, can be considered as potential drug target. The polypeptide is Phosphatidylinositol:ceramide inositolphosphotransferase (Leishmania major).